A 991-amino-acid chain; its full sequence is Pentatricopeptide repeat-containing protein At1g73710 (991 aa).

2 disordered regions span residues 1–27 (MLQP…HHHH) and 61–81 (SSSS…RKRK). Basic residues predominate over residues 15–27 (VRHHHHHHHHHHH). Over residues 61 to 73 (SSSSVSPPRCSKP) the composition is skewed to low complexity. PPR repeat units follow at residues 144–178 (NVIH…GVLP), 179–213 (TNNT…MHFP), 214–248 (DEVT…KVDL), 304–338 (LTST…GVPI), 339–373 (DTVT…GISP), 374–408 (DTKT…GLFP), 409–443 (DTVT…SIRI), 444–474 (DEHS…FQLD), 478–513 (SSTT…GQRN), 514–548 (DVLE…GTWP), 549–583 (DECT…GCKP), 584–618 (GCKT…GVKP), 619–653 (NEVV…GVQS), 654–688 (NHIV…EGGP), 689–719 (DVAA…LREK), 723–757 (DVIS…GLLS), 758–792 (DCTS…RKLL), 862–896 (EHFA…GLEP), and 897–931 (DIVT…ELEP). Residues 965 to 974 (AERECSSRSG) show a composition bias toward basic and acidic residues. The tract at residues 965 to 991 (AERECSSRSGEEEEDDEEENSEEDEAF) is disordered. Over residues 975–991 (EEEEDDEEENSEEDEAF) the composition is skewed to acidic residues.

The protein belongs to the PPR family. P subfamily.

The protein is Pentatricopeptide repeat-containing protein At1g73710 of Arabidopsis thaliana (Mouse-ear cress).